The sequence spans 683 residues: Protein kinase C eta type (683 aa).

The C2 domain occupies 1 to 118; it reads MSSGTMKFNG…LRTAGTSDTF (118 aa). S28 and S32 each carry phosphoserine. Phorbol-ester/DAG-type zinc fingers lie at residues 171-222 and 245-295; these read GHKF…VTAC and PHKF…APNC. A Phosphoserine modification is found at S317. One can recognise a Protein kinase domain in the interval 355–614; the sequence is FEFIRVLGKG…EHEILRHPFF (260 aa). Residues 361 to 369 and K384 each bind ATP; that span reads LGKGSFGKV. D479 serves as the catalytic Proton acceptor. T513 carries the phosphothreonine; by PDPK1 modification. The 69-residue stretch at 615-683 folds into the AGC-kinase C-terminal domain; that stretch reads KEIDWVQLNH…FSYVSPELQP (69 aa). At T656 the chain carries Phosphothreonine. A Phosphoserine modification is found at S675.

It belongs to the protein kinase superfamily. AGC Ser/Thr protein kinase family. PKC subfamily. Interacts with FYN. Interacts with RALA. Interacts with DGKQ.

The protein resides in the cytoplasm. The catalysed reaction is L-seryl-[protein] + ATP = O-phospho-L-seryl-[protein] + ADP + H(+). It carries out the reaction L-threonyl-[protein] + ATP = O-phospho-L-threonyl-[protein] + ADP + H(+). Novel PKCs (PRKCD, PRKCE, PRKCH and PRKCQ) are calcium-insensitive, but activated by diacylglycerol (DAG) and phosphatidylserine. Three specific sites; Thr-513 (activation loop of the kinase domain), Thr-656 (turn motif) and Ser-675 (hydrophobic region), need to be phosphorylated for its full activation. Its function is as follows. Calcium-independent, phospholipid- and diacylglycerol (DAG)-dependent serine/threonine-protein kinase that is involved in the regulation of cell differentiation in keratinocytes and pre-B cell receptor, mediates regulation of epithelial tight junction integrity and foam cell formation, and is required for glioblastoma proliferation and apoptosis prevention in MCF-7 cells. In keratinocytes, binds and activates the tyrosine kinase FYN, which in turn blocks epidermal growth factor receptor (EGFR) signaling and leads to keratinocyte growth arrest and differentiation. Associates with the cyclin CCNE1-CDK2-CDKN1B complex and inhibits CDK2 kinase activity, leading to RB1 dephosphorylation and thereby G1 arrest in keratinocytes. In association with RALA activates actin depolymerization, which is necessary for keratinocyte differentiation. In the pre-B cell receptor signaling, functions downstream of BLNK by up-regulating IRF4, which in turn activates L chain gene rearrangement. Regulates epithelial tight junctions (TJs) by phosphorylating occludin (OCLN) on threonine residues, which is necessary for the assembly and maintenance of TJs. In association with PLD2 and via TLR4 signaling, is involved in lipopolysaccharide (LPS)-induced RGS2 down-regulation and foam cell formation. Upon PMA stimulation, mediates glioblastoma cell proliferation by activating the mTOR pathway, the PI3K/AKT pathway and the ERK1-dependent phosphorylation of ELK1. Involved in the protection of glioblastoma cells from irradiation-induced apoptosis by preventing caspase-9 activation. In camptothecin-treated MCF-7 cells, regulates NF-kappa-B upstream signaling by activating IKBKB, and confers protection against DNA damage-induced apoptosis. Promotes oncogenic functions of ATF2 in the nucleus while blocking its apoptotic function at mitochondria. Phosphorylates ATF2 which promotes its nuclear retention and transcriptional activity and negatively regulates its mitochondrial localization. The polypeptide is Protein kinase C eta type (Prkch) (Rattus norvegicus (Rat)).